Reading from the N-terminus, the 37-residue chain is Large ribosomal subunit protein bL36 (37 aa).

Belongs to the bacterial ribosomal protein bL36 family.

The chain is Large ribosomal subunit protein bL36 from Sulfurimonas denitrificans (strain ATCC 33889 / DSM 1251) (Thiomicrospira denitrificans (strain ATCC 33889 / DSM 1251)).